Consider the following 131-residue polypeptide: Hydrogenase maturation factor HypA (131 aa).

Ni(2+) is bound at residue H2. 4 residues coordinate Zn(2+): C74, C77, C91, and C94.

It belongs to the HypA/HybF family.

Involved in the maturation of [NiFe] hydrogenases. Required for nickel insertion into the metal center of the hydrogenase. The polypeptide is Hydrogenase maturation factor HypA (Streptomyces avermitilis (strain ATCC 31267 / DSM 46492 / JCM 5070 / NBRC 14893 / NCIMB 12804 / NRRL 8165 / MA-4680)).